The following is a 232-amino-acid chain: Ubiquinone biosynthesis O-methyltransferase (232 aa).

S-adenosyl-L-methionine-binding residues include Arg36, Gly55, Asp76, and Leu120.

This sequence belongs to the methyltransferase superfamily. UbiG/COQ3 family.

It carries out the reaction a 3-demethylubiquinol + S-adenosyl-L-methionine = a ubiquinol + S-adenosyl-L-homocysteine + H(+). It catalyses the reaction a 3-(all-trans-polyprenyl)benzene-1,2-diol + S-adenosyl-L-methionine = a 2-methoxy-6-(all-trans-polyprenyl)phenol + S-adenosyl-L-homocysteine + H(+). The protein operates within cofactor biosynthesis; ubiquinone biosynthesis. O-methyltransferase that catalyzes the 2 O-methylation steps in the ubiquinone biosynthetic pathway. This Pseudomonas putida (strain W619) protein is Ubiquinone biosynthesis O-methyltransferase.